Here is a 571-residue protein sequence, read N- to C-terminus: RNA polymerase sigma factor SigA (571 aa).

Residues 321 to 391 (MVESNLRLVI…TRAIADQART (71 aa)) are sigma-70 factor domain-2. The Interaction with polymerase core subunit RpoC motif lies at 345 to 348 (DLIQ). A sigma-70 factor domain-3 region spans residues 400-476 (ETINKVLRGA…DTAVESPAEA (77 aa)). The sigma-70 factor domain-4 stretch occupies residues 489-542 (VLKTLTDRERFVLIHRFGLLDGRPKTLEEVGSAFNVTRERIRQIEAKALRKMRH). Residues 515-534 (LEEVGSAFNVTRERIRQIEA) constitute a DNA-binding region (H-T-H motif).

It belongs to the sigma-70 factor family. RpoD/SigA subfamily. In terms of assembly, interacts transiently with the RNA polymerase catalytic core.

It is found in the cytoplasm. Its function is as follows. Sigma factors are initiation factors that promote the attachment of RNA polymerase to specific initiation sites and are then released. This sigma factor is the primary sigma factor during exponential growth. The sequence is that of RNA polymerase sigma factor SigA from Chlamydia muridarum (strain MoPn / Nigg).